The primary structure comprises 190 residues: MGGCCSSSRKSHLVGTPVYYYCPESFEELVPSGTRAGVGSAFTTGLLVDIGLETSIPDTFCAPAPLPYDLLLGRPQCTDSESIKGRMSGSSFETLATCEDLGESDCKTLASSVILSPRKSDFSKHQGLKILVDEEEDCCPICFEDYDVENPRLTTKCEHEFHLSCLLEWIERSDRCPICDKEVVFDDRLN.

The RING-type; atypical zinc-finger motif lies at C139 to D180.

It carries out the reaction S-ubiquitinyl-[E2 ubiquitin-conjugating enzyme]-L-cysteine + [acceptor protein]-L-lysine = [E2 ubiquitin-conjugating enzyme]-L-cysteine + N(6)-ubiquitinyl-[acceptor protein]-L-lysine.. It participates in protein modification; protein ubiquitination. Probable E3 ubiquitin-protein ligase that may possess E3 ubiquitin ligase activity in vitro. The polypeptide is Probable E3 ubiquitin-protein ligase RHB1A (Arabidopsis thaliana (Mouse-ear cress)).